Here is a 434-residue protein sequence, read N- to C-terminus: Eukaryotic translation initiation factor 3 subunit E-2 (434 aa).

One can recognise a PCI domain in the interval 219 to 392 (FFNHPKGRDL…GHVVMGTQPL (174 aa)).

This sequence belongs to the eIF-3 subunit E family. Component of the eukaryotic translation initiation factor 3 (eIF-3) complex. The eIF-3 complex interacts with pix. Interacts with mxt.

The protein resides in the cytoplasm. In terms of biological role, component of the eukaryotic translation initiation factor 3 (eIF-3) complex, which is involved in protein synthesis of a specialized repertoire of mRNAs and, together with other initiation factors, stimulates binding of mRNA and methionyl-tRNAi to the 40S ribosome. The eIF-3 complex specifically targets and initiates translation of a subset of mRNAs involved in cell proliferation. This chain is Eukaryotic translation initiation factor 3 subunit E-2 (eIF3-S6-2), found in Drosophila willistoni (Fruit fly).